The chain runs to 334 residues: L-lactate dehydrogenase B-A chain (334 aa).

Residues 30 to 58 and Arg100 each bind NAD(+); that span reads GQVG…VEDR. Arg107, Asn139, and Arg170 together coordinate substrate. NAD(+) is bound at residue Asn139. The Proton acceptor role is filled by His194. Thr249 lines the substrate pocket.

It belongs to the LDH/MDH superfamily. LDH family. In terms of assembly, homotetramer.

The protein resides in the cytoplasm. It catalyses the reaction (S)-lactate + NAD(+) = pyruvate + NADH + H(+). It participates in fermentation; pyruvate fermentation to lactate; (S)-lactate from pyruvate: step 1/1. This chain is L-lactate dehydrogenase B-A chain (ldhba), found in Danio rerio (Zebrafish).